The sequence spans 528 residues: Zinc finger protein 16-like (528 aa).

Positions 1–28 are disordered; it reads MSRKRNHCYMETGASSESQGAFVDSAGP. The stretch at 79–106 forms a coiled coil; it reads IRVLKMELREKSDEIELLKAKLESAEKD. Disordered stretches follow at residues 159-202 and 232-293; these read GAAE…TDAE and FKGD…DRME. A compositionally biased stretch (basic and acidic residues) spans 232 to 242; that stretch reads FKGDSETKCED. The span at 244-256 shows a compositional bias: acidic residues; it reads PPMDEEDENEDSE. 2 stretches are compositionally biased toward basic and acidic residues: residues 257-270 and 278-293; these read EGRG…DHFP and GEDR…DRME. A C2H2-type 1 zinc finger spans residues 303–326; it reads FICPFCGTLCPDSSFLEEHIKLMH. A compositionally biased stretch (low complexity) spans 333–345; it reads QSTSAGSSSQAEG. The segment at 333–359 is disordered; the sequence is QSTSAGSSSQAEGDSGEAGPASRGARE. C2H2-type zinc fingers lie at residues 366–388, 394–416, 423–445, and 451–473; these read YECG…QRIH, FVCP…RLSH, FPCP…QRVH, and YACP…MRIH. Residues 479–501 form a C2H2-type 6; degenerate zinc finger; the sequence is YTCYQCGRSFRHLGTYKSHRCMP. Residues 502-528 form a disordered region; sequence ATQMPSEHSPPWAQEDKVQTGRLQGYV.

The protein belongs to the krueppel C2H2-type zinc-finger protein family.

The protein localises to the nucleus. In terms of biological role, probable transcription factor. Important for development and migration of oligodendrocyte precursor cells, and normal myelination of axons in the central nervous system (CNS). Functions autonomously in oligodendrocytes to promote CNS myelination. Seems to act in parallel with notch3 during oligodendrocyte development. This is Zinc finger protein 16-like from Danio rerio (Zebrafish).